The primary structure comprises 152 residues: Endoribonuclease YbeY (152 aa).

Residues His113, His117, and His123 each contribute to the Zn(2+) site.

The protein belongs to the endoribonuclease YbeY family. The cofactor is Zn(2+).

It is found in the cytoplasm. Single strand-specific metallo-endoribonuclease involved in late-stage 70S ribosome quality control and in maturation of the 3' terminus of the 16S rRNA. This Janthinobacterium sp. (strain Marseille) (Minibacterium massiliensis) protein is Endoribonuclease YbeY.